The primary structure comprises 189 residues: Auxin-induced protein IAA4 (189 aa).

Positions 8–12 (LRLGL) match the EAR-like (transcriptional repression) motif. In terms of domain architecture, PB1 spans 92–179 (GIFVKVSMDG…SCKRLRIMKG (88 aa)).

Belongs to the Aux/IAA family. In terms of assembly, homodimers and heterodimers. Phosphorylated by phytochrome A in vitro.

The protein localises to the nucleus. Its function is as follows. Aux/IAA proteins are short-lived transcriptional factors that function as repressors of early auxin response genes at low auxin concentrations. Repression is thought to result from the interaction with auxin response factors (ARFs), proteins that bind to the auxin-responsive promoter element (AuxRE). Formation of heterodimers with ARF proteins may alter their ability to modulate early auxin response genes expression. The sequence is that of Auxin-induced protein IAA4 (IAA4/5) from Pisum sativum (Garden pea).